Reading from the N-terminus, the 335-residue chain is Phosphate acyltransferase (335 aa).

The protein belongs to the PlsX family. As to quaternary structure, homodimer. Probably interacts with PlsY.

It is found in the cytoplasm. It carries out the reaction a fatty acyl-[ACP] + phosphate = an acyl phosphate + holo-[ACP]. It functions in the pathway lipid metabolism; phospholipid metabolism. Functionally, catalyzes the reversible formation of acyl-phosphate (acyl-PO(4)) from acyl-[acyl-carrier-protein] (acyl-ACP). This enzyme utilizes acyl-ACP as fatty acyl donor, but not acyl-CoA. The sequence is that of Phosphate acyltransferase from Heliobacterium modesticaldum (strain ATCC 51547 / Ice1).